The sequence spans 467 residues: Glutamate--tRNA ligase (467 aa).

The 'HIGH' region signature appears at 9–19 (PSPTGFLHIGG). The 'KMSKS' region signature appears at 250–254 (KLSKR). Lys-253 contributes to the ATP binding site.

Belongs to the class-I aminoacyl-tRNA synthetase family. Glutamate--tRNA ligase type 1 subfamily. Monomer.

Its subcellular location is the cytoplasm. The enzyme catalyses tRNA(Glu) + L-glutamate + ATP = L-glutamyl-tRNA(Glu) + AMP + diphosphate. Functionally, catalyzes the attachment of glutamate to tRNA(Glu) in a two-step reaction: glutamate is first activated by ATP to form Glu-AMP and then transferred to the acceptor end of tRNA(Glu). The chain is Glutamate--tRNA ligase from Mesomycoplasma hyopneumoniae (strain 232) (Mycoplasma hyopneumoniae).